A 165-amino-acid chain; its full sequence is Growth arrest and DNA damage-inducible protein GADD45 alpha (165 aa).

Position 2 is a phosphothreonine (Thr2).

This sequence belongs to the GADD45 family. Interacts with MAPK14. Predominantly monomeric but also forms dimers and other oligomers as concentration increases. Interacts with GADD45GIP1. Interacts weakly with PCNA. Interacts with AURKA, likely to compete with dimerization.

The protein localises to the nucleus. Functionally, in T-cells, functions as a regulator of p38 MAPKs by inhibiting p88 phosphorylation and activity. Might affect PCNA interaction with some CDK (cell division protein kinase) complexes; stimulates DNA excision repair in vitro and inhibits entry of cells into S phase. This is Growth arrest and DNA damage-inducible protein GADD45 alpha (GADD45A) from Homo sapiens (Human).